Here is a 630-residue protein sequence, read N- to C-terminus: Arginine--tRNA ligase (630 aa).

The short motif at 120 to 130 is the 'HIGH' region element; that stretch reads ANPIHPLHIGH.

This sequence belongs to the class-I aminoacyl-tRNA synthetase family.

Its subcellular location is the cytoplasm. The catalysed reaction is tRNA(Arg) + L-arginine + ATP = L-arginyl-tRNA(Arg) + AMP + diphosphate. In Pyrobaculum arsenaticum (strain DSM 13514 / JCM 11321 / PZ6), this protein is Arginine--tRNA ligase.